We begin with the raw amino-acid sequence, 314 residues long: 3'-5' exoribonuclease YhaM (314 aa).

Residues 163 to 279 form the HD domain; it reads HVVSMLDLAK…LHYIDNLDAK (117 aa).

The protein belongs to the YhaM family.

Functionally, shows a 3'-5' exoribonuclease activity. The sequence is that of 3'-5' exoribonuclease YhaM from Bacillus thuringiensis (strain Al Hakam).